The primary structure comprises 245 residues: Hydrolase pyvD (245 aa).

Active-site residues include cysteine 133, aspartate 179, and histidine 211.

Belongs to the dienelactone hydrolase family.

It participates in secondary metabolite biosynthesis. In terms of biological role, hydrolase; part of the gene cluster that mediates the biosynthesis of pyranoviolin A, a pyranonigrin analog with a C-3 methoxy group. Initially, the PKS portion of pyvA synthesizes C-10 carbon chain from 5 molecules of malonyl-CoA, which is then condensed with the thiolation (T) domain-bound glycine activated by the adenylation (A) domain. The subsequent chain release by Dieckmann condensation (DKC) could be catalyzed by the TE domain present at the C-terminus of pyvA and/or the alpha/beta hydrolase pyvD, installing the tetramic acid moiety. The FAD-dependent monooxygenase pyvC next epoxidizes one of the olefins of the polyketide part, and the epoxide ring-opening induces the dihydro-gamma-pyrone ring formation. The cytochrome P450 monooxygeanse pyvB would be responsible for the 2 consecutive reactions, in which the dihydro-gamma-pyrone is oxidized to gamma-pyrone and C-7 is hydroxylated to yield pyranonigrin F. Finally, the O-methyltransferase pyvH methylates the C-3 hydroxy group to complete the biosynthesis. In Aspergillus violaceofuscus (strain CBS 115571), this protein is Hydrolase pyvD.